A 550-amino-acid polypeptide reads, in one-letter code: uncharacterized protein (550 aa).

The signal sequence occupies residues 1–53; sequence MVVIANKGALWAYYCKRLLNSVTYMMYPLIRKRTMKKLLLIVGLLLACSTVMR. 2 N-linked (GlcNAc...) asparagine glycosylation sites follow: asparagine 296 and asparagine 518.

The protein resides in the endoplasmic reticulum. This is an uncharacterized protein from Schizosaccharomyces pombe (strain 972 / ATCC 24843) (Fission yeast).